Consider the following 97-residue polypeptide: Co-chaperonin GroES (97 aa).

The protein belongs to the GroES chaperonin family. As to quaternary structure, heptamer of 7 subunits arranged in a ring. Interacts with the chaperonin GroEL.

Its subcellular location is the cytoplasm. Together with the chaperonin GroEL, plays an essential role in assisting protein folding. The GroEL-GroES system forms a nano-cage that allows encapsulation of the non-native substrate proteins and provides a physical environment optimized to promote and accelerate protein folding. GroES binds to the apical surface of the GroEL ring, thereby capping the opening of the GroEL channel. This chain is Co-chaperonin GroES, found in Gemmatimonas aurantiaca (strain DSM 14586 / JCM 11422 / NBRC 100505 / T-27).